The primary structure comprises 610 residues: Elongation factor 4 (610 aa).

One can recognise a tr-type G domain in the interval 11 to 193; the sequence is ENIRNFSIIA…QIVEKVPAPS (183 aa). GTP-binding positions include 23–28 and 140–143; these read DHGKST and NKID.

The protein belongs to the TRAFAC class translation factor GTPase superfamily. Classic translation factor GTPase family. LepA subfamily.

It is found in the cell membrane. The catalysed reaction is GTP + H2O = GDP + phosphate + H(+). In terms of biological role, required for accurate and efficient protein synthesis under certain stress conditions. May act as a fidelity factor of the translation reaction, by catalyzing a one-codon backward translocation of tRNAs on improperly translocated ribosomes. Back-translocation proceeds from a post-translocation (POST) complex to a pre-translocation (PRE) complex, thus giving elongation factor G a second chance to translocate the tRNAs correctly. Binds to ribosomes in a GTP-dependent manner. This Streptococcus equi subsp. equi (strain 4047) protein is Elongation factor 4.